The chain runs to 428 residues: 3-phosphoshikimate 1-carboxyvinyltransferase (428 aa).

3-phosphoshikimate is bound by residues K23, S24, and R28. A phosphoenolpyruvate-binding site is contributed by K23. Phosphoenolpyruvate-binding residues include G97 and R125. 3-phosphoshikimate is bound by residues S170, S171, Q172, S198, D314, N338, and K342. Q172 provides a ligand contact to phosphoenolpyruvate. The active-site Proton acceptor is the D314. Residues R346, R388, and K413 each contribute to the phosphoenolpyruvate site.

This sequence belongs to the EPSP synthase family. As to quaternary structure, monomer.

The protein resides in the cytoplasm. The enzyme catalyses 3-phosphoshikimate + phosphoenolpyruvate = 5-O-(1-carboxyvinyl)-3-phosphoshikimate + phosphate. It functions in the pathway metabolic intermediate biosynthesis; chorismate biosynthesis; chorismate from D-erythrose 4-phosphate and phosphoenolpyruvate: step 6/7. Its function is as follows. Catalyzes the transfer of the enolpyruvyl moiety of phosphoenolpyruvate (PEP) to the 5-hydroxyl of shikimate-3-phosphate (S3P) to produce enolpyruvyl shikimate-3-phosphate and inorganic phosphate. In Baumannia cicadellinicola subsp. Homalodisca coagulata, this protein is 3-phosphoshikimate 1-carboxyvinyltransferase.